The sequence spans 195 residues: ATP-dependent Clp protease proteolytic subunit (195 aa).

S98 (nucleophile) is an active-site residue. Residue H123 is part of the active site.

It belongs to the peptidase S14 family. In terms of assembly, fourteen ClpP subunits assemble into 2 heptameric rings which stack back to back to give a disk-like structure with a central cavity, resembling the structure of eukaryotic proteasomes.

It is found in the cytoplasm. The enzyme catalyses Hydrolysis of proteins to small peptides in the presence of ATP and magnesium. alpha-casein is the usual test substrate. In the absence of ATP, only oligopeptides shorter than five residues are hydrolyzed (such as succinyl-Leu-Tyr-|-NHMec, and Leu-Tyr-Leu-|-Tyr-Trp, in which cleavage of the -Tyr-|-Leu- and -Tyr-|-Trp bonds also occurs).. Cleaves peptides in various proteins in a process that requires ATP hydrolysis. Has a chymotrypsin-like activity. Plays a major role in the degradation of misfolded proteins. The polypeptide is ATP-dependent Clp protease proteolytic subunit (Caldanaerobacter subterraneus subsp. tengcongensis (strain DSM 15242 / JCM 11007 / NBRC 100824 / MB4) (Thermoanaerobacter tengcongensis)).